Here is a 262-residue protein sequence, read N- to C-terminus: Acyl-[acyl-carrier-protein]--UDP-N-acetylglucosamine O-acyltransferase (262 aa).

The protein belongs to the transferase hexapeptide repeat family. LpxA subfamily. In terms of assembly, homotrimer.

Its subcellular location is the cytoplasm. The catalysed reaction is a (3R)-hydroxyacyl-[ACP] + UDP-N-acetyl-alpha-D-glucosamine = a UDP-3-O-[(3R)-3-hydroxyacyl]-N-acetyl-alpha-D-glucosamine + holo-[ACP]. The protein operates within glycolipid biosynthesis; lipid IV(A) biosynthesis; lipid IV(A) from (3R)-3-hydroxytetradecanoyl-[acyl-carrier-protein] and UDP-N-acetyl-alpha-D-glucosamine: step 1/6. Its function is as follows. Involved in the biosynthesis of lipid A, a phosphorylated glycolipid that anchors the lipopolysaccharide to the outer membrane of the cell. This Aliivibrio salmonicida (strain LFI1238) (Vibrio salmonicida (strain LFI1238)) protein is Acyl-[acyl-carrier-protein]--UDP-N-acetylglucosamine O-acyltransferase.